The following is a 358-amino-acid chain: NADH-quinone oxidoreductase subunit H (358 aa).

8 consecutive transmembrane segments (helical) span residues Ile-20 to Ile-40, Ala-95 to Ile-115, Ile-128 to Gly-148, Ile-168 to Met-188, Val-206 to Val-226, Gly-253 to Leu-273, Thr-295 to Ile-315, and Val-334 to Leu-354.

It belongs to the complex I subunit 1 family. As to quaternary structure, NDH-1 is composed of 14 different subunits. Subunits NuoA, H, J, K, L, M, N constitute the membrane sector of the complex.

Its subcellular location is the cell inner membrane. The catalysed reaction is a quinone + NADH + 5 H(+)(in) = a quinol + NAD(+) + 4 H(+)(out). NDH-1 shuttles electrons from NADH, via FMN and iron-sulfur (Fe-S) centers, to quinones in the respiratory chain. The immediate electron acceptor for the enzyme in this species is believed to be ubiquinone. Couples the redox reaction to proton translocation (for every two electrons transferred, four hydrogen ions are translocated across the cytoplasmic membrane), and thus conserves the redox energy in a proton gradient. This subunit may bind ubiquinone. The polypeptide is NADH-quinone oxidoreductase subunit H (Neisseria meningitidis serogroup B (strain ATCC BAA-335 / MC58)).